Consider the following 95-residue polypeptide: Aspartyl/glutamyl-tRNA(Asn/Gln) amidotransferase subunit C (95 aa).

It belongs to the GatC family. As to quaternary structure, heterotrimer of A, B and C subunits.

The catalysed reaction is L-glutamyl-tRNA(Gln) + L-glutamine + ATP + H2O = L-glutaminyl-tRNA(Gln) + L-glutamate + ADP + phosphate + H(+). It catalyses the reaction L-aspartyl-tRNA(Asn) + L-glutamine + ATP + H2O = L-asparaginyl-tRNA(Asn) + L-glutamate + ADP + phosphate + 2 H(+). Functionally, allows the formation of correctly charged Asn-tRNA(Asn) or Gln-tRNA(Gln) through the transamidation of misacylated Asp-tRNA(Asn) or Glu-tRNA(Gln) in organisms which lack either or both of asparaginyl-tRNA or glutaminyl-tRNA synthetases. The reaction takes place in the presence of glutamine and ATP through an activated phospho-Asp-tRNA(Asn) or phospho-Glu-tRNA(Gln). This Acidiphilium cryptum (strain JF-5) protein is Aspartyl/glutamyl-tRNA(Asn/Gln) amidotransferase subunit C.